The sequence spans 185 residues: Ribosome-recycling factor (185 aa).

This sequence belongs to the RRF family.

It is found in the cytoplasm. Responsible for the release of ribosomes from messenger RNA at the termination of protein biosynthesis. May increase the efficiency of translation by recycling ribosomes from one round of translation to another. The polypeptide is Ribosome-recycling factor (Pseudomonas entomophila (strain L48)).